The primary structure comprises 323 residues: Formyltetrahydrofolate deformylase 1, mitochondrial (323 aa).

The transit peptide at 1–25 directs the protein to the mitochondrion; it reads MIRRITERASGFAKNIPILKSSRFH. Residues 41 to 124 enclose the ACT domain; that stretch reads VHVFHCQDAV…SVVRVPSIDP (84 aa). Residue aspartate 267 is part of the active site.

The protein belongs to the PurU family. As to expression, expressed in leaves, cotyledons, roots, seeds and flowers.

It localises to the mitochondrion. It carries out the reaction (6R)-10-formyltetrahydrofolate + H2O = (6S)-5,6,7,8-tetrahydrofolate + formate + H(+). Functionally, deformylase involved in photorespiration. Prevents excessive accumulation of 5-formyl tetrahydrofolate (THF), a potent inhibitor of the Gly decarboxylase/Ser hydroxymethyltransferase complex. The protein is Formyltetrahydrofolate deformylase 1, mitochondrial (PURU1) of Arabidopsis thaliana (Mouse-ear cress).